We begin with the raw amino-acid sequence, 263 residues long: Endonuclease 8 (263 aa).

Pro-2 (schiff-base intermediate with DNA) is an active-site residue. Residue Glu-3 is the Proton donor of the active site. Residue Lys-53 is the Proton donor; for beta-elimination activity of the active site. Gln-70, Arg-125, and Asn-169 together coordinate DNA. An FPG-type zinc finger spans residues 229–263 (KVFHRDGEACERCGGIIEKTTLSSRPFYWCPHCQK). The Proton donor; for delta-elimination activity role is filled by Arg-253.

It belongs to the FPG family. Requires Zn(2+) as cofactor.

It carries out the reaction 2'-deoxyribonucleotide-(2'-deoxyribose 5'-phosphate)-2'-deoxyribonucleotide-DNA = a 3'-end 2'-deoxyribonucleotide-(2,3-dehydro-2,3-deoxyribose 5'-phosphate)-DNA + a 5'-end 5'-phospho-2'-deoxyribonucleoside-DNA + H(+). Its function is as follows. Involved in base excision repair of DNA damaged by oxidation or by mutagenic agents. Acts as a DNA glycosylase that recognizes and removes damaged bases. Has a preference for oxidized pyrimidines, such as thymine glycol, 5,6-dihydrouracil and 5,6-dihydrothymine. Has AP (apurinic/apyrimidinic) lyase activity and introduces nicks in the DNA strand. Cleaves the DNA backbone by beta-delta elimination to generate a single-strand break at the site of the removed base with both 3'- and 5'-phosphates. This chain is Endonuclease 8, found in Salmonella dublin (strain CT_02021853).